Consider the following 84-residue polypeptide: Envelope small membrane protein (84 aa).

Residues methionine 1 to isoleucine 18 lie on the Virion surface side of the membrane. The chain crosses the membrane as a helical span at residues isoleucine 19–phenylalanine 39. Residues lysine 40 to aspartate 80 are Intravirion-facing.

It belongs to the betacoronaviruses E protein family. In terms of assembly, homopentamer. Interacts with membrane protein M in the budding compartment of the host cell, which is located between endoplasmic reticulum and the Golgi complex. Interacts with Nucleoprotein.

It localises to the host Golgi apparatus membrane. Plays a central role in virus morphogenesis and assembly. Acts as a viroporin and self-assembles in host membranes forming pentameric protein-lipid pores that allow ion transport. Also plays a role in the induction of apoptosis. This is Envelope small membrane protein from Bovine coronavirus (strain 98TXSF-110-ENT) (BCoV-ENT).